The following is a 489-amino-acid chain: N-succinylglutamate 5-semialdehyde dehydrogenase (489 aa).

223-228 (GSASTG) provides a ligand contact to NAD(+). Residues E246 and C280 contribute to the active site.

The protein belongs to the aldehyde dehydrogenase family. AstD subfamily.

It carries out the reaction N-succinyl-L-glutamate 5-semialdehyde + NAD(+) + H2O = N-succinyl-L-glutamate + NADH + 2 H(+). It participates in amino-acid degradation; L-arginine degradation via AST pathway; L-glutamate and succinate from L-arginine: step 4/5. Its function is as follows. Catalyzes the NAD-dependent reduction of succinylglutamate semialdehyde into succinylglutamate. This Acinetobacter baylyi (strain ATCC 33305 / BD413 / ADP1) protein is N-succinylglutamate 5-semialdehyde dehydrogenase.